The chain runs to 105 residues: Large ribosomal subunit protein uL24 (105 aa).

It belongs to the universal ribosomal protein uL24 family. In terms of assembly, part of the 50S ribosomal subunit.

In terms of biological role, one of two assembly initiator proteins, it binds directly to the 5'-end of the 23S rRNA, where it nucleates assembly of the 50S subunit. Its function is as follows. One of the proteins that surrounds the polypeptide exit tunnel on the outside of the subunit. The polypeptide is Large ribosomal subunit protein uL24 (Clostridium novyi (strain NT)).